The chain runs to 444 residues: Ribosomal protein uS12 methylthiotransferase RimO (444 aa).

An MTTase N-terminal domain is found at 6 to 116 (PNIGFVSLGC…VMEHVHKYVP (111 aa)). [4Fe-4S] cluster contacts are provided by cysteine 15, cysteine 51, cysteine 80, cysteine 148, cysteine 152, and cysteine 155. The Radical SAM core domain occupies 134-375 (LTPKHYAYLK…MQLQQEISAA (242 aa)). The TRAM domain maps to 378-444 (QQKIGKTWKV…ADEYDLWGTC (67 aa)).

Belongs to the methylthiotransferase family. RimO subfamily. [4Fe-4S] cluster serves as cofactor.

It localises to the cytoplasm. It carries out the reaction L-aspartate(89)-[ribosomal protein uS12]-hydrogen + (sulfur carrier)-SH + AH2 + 2 S-adenosyl-L-methionine = 3-methylsulfanyl-L-aspartate(89)-[ribosomal protein uS12]-hydrogen + (sulfur carrier)-H + 5'-deoxyadenosine + L-methionine + A + S-adenosyl-L-homocysteine + 2 H(+). Its function is as follows. Catalyzes the methylthiolation of an aspartic acid residue of ribosomal protein uS12. This Actinobacillus succinogenes (strain ATCC 55618 / DSM 22257 / CCUG 43843 / 130Z) protein is Ribosomal protein uS12 methylthiotransferase RimO.